Reading from the N-terminus, the 218-residue chain is uncharacterized protein (218 aa).

Residues 11 to 31 (AAGLFPLALMLSGCISYALVS) traverse the membrane as a helical segment.

Its subcellular location is the membrane. This is an uncharacterized protein from Escherichia coli (strain K12).